The following is a 390-amino-acid chain: Putative nickel insertion protein (390 aa).

Belongs to the LarC family.

The polypeptide is Putative nickel insertion protein (Geotalea daltonii (strain DSM 22248 / JCM 15807 / FRC-32) (Geobacter daltonii)).